The primary structure comprises 351 residues: Small ribosomal subunit biogenesis GTPase RsgA 1 (351 aa).

The CP-type G domain maps to 100-258 (LRTDAQIVAS…IIDTPGMREL (159 aa)). GTP contacts are provided by residues 148-151 (SKVD) and 200-208 (GSSGAGKST). Positions 282, 287, 289, and 295 each coordinate Zn(2+).

This sequence belongs to the TRAFAC class YlqF/YawG GTPase family. RsgA subfamily. As to quaternary structure, monomer. Associates with 30S ribosomal subunit, binds 16S rRNA. The cofactor is Zn(2+).

The protein resides in the cytoplasm. Its function is as follows. One of several proteins that assist in the late maturation steps of the functional core of the 30S ribosomal subunit. Helps release RbfA from mature subunits. May play a role in the assembly of ribosomal proteins into the subunit. Circularly permuted GTPase that catalyzes slow GTP hydrolysis, GTPase activity is stimulated by the 30S ribosomal subunit. The polypeptide is Small ribosomal subunit biogenesis GTPase RsgA 1 (Oceanobacillus iheyensis (strain DSM 14371 / CIP 107618 / JCM 11309 / KCTC 3954 / HTE831)).